Here is a 1052-residue protein sequence, read N- to C-terminus: SE-cephalotoxin (1052 aa).

The first 21 residues, Met-1–Ala-21, serve as a signal peptide directing secretion. A propeptide spanning residues Ala-22 to Thr-29 is cleaved from the precursor. Residue Asn-41 is glycosylated (N-linked (GlcNAc...) asparagine). The stretch at Thr-130–Glu-194 forms a coiled coil. Asn-353 carries N-linked (GlcNAc...) asparagine glycosylation. Residues Pro-460–Gln-497 form the EGF-like domain. 3 disulfides stabilise this stretch: Cys-464-Cys-474, Cys-468-Cys-485, and Cys-487-Cys-496. Residues Asn-576 and Asn-715 are each glycosylated (N-linked (GlcNAc...) asparagine). The Sushi domain maps to Thr-709–Ser-769. 7 cysteine pairs are disulfide-bonded: Cys-711–Cys-752, Cys-739–Cys-767, Cys-780–Cys-814, Cys-784–Cys-820, Cys-795–Cys-804, Cys-829–Cys-847, and Cys-841–Cys-858. The TSP type-1 domain maps to Glu-768–Gln-821. Asn-786 carries N-linked (GlcNAc...) asparagine glycosylation. The LDL-receptor class A domain maps to Cys-819–Lys-859.

In terms of assembly, monomer. In terms of tissue distribution, expressed by the salivary gland.

The protein resides in the secreted. This is SE-cephalotoxin from Acanthosepion esculentum (Golden cuttlefish).